Here is a 372-residue protein sequence, read N- to C-terminus: Probable basic-leucine zipper transcription factor G (372 aa).

Disordered stretches follow at residues 1–20 (MLSV…QQQQ) and 176–234 (TTNN…EKFE). 2 stretches are compositionally biased toward low complexity: residues 11-20 (QQPQQQQQQQ) and 176-215 (TTNN…KSNT). Positions 223-234 (IRNSNSTFEKFE) are enriched in polar residues. The bZIP domain occupies 277-340 (ELKRQKRLIK…LILKAEVGQL (64 aa)). A basic motif region spans residues 279–301 (KRQKRLIKNRESAHLSRQRKRER). Residues 305–340 (LEHRVEELSSNSIDINKTLSSLENENLILKAEVGQL) form a leucine-zipper region.

Belongs to the bZIP family.

The protein resides in the nucleus. Probable transcriptional regulator. In Dictyostelium discoideum (Social amoeba), this protein is Probable basic-leucine zipper transcription factor G (bzpG).